A 410-amino-acid chain; its full sequence is Structure-specific endonuclease subunit SLX1 homolog (410 aa).

Positions 6-89 (QLHYCYFLLS…NICKVTRDNI (84 aa)) constitute a GIY-YIG domain.

It belongs to the SLX1 family. In terms of assembly, forms a heterodimer with a member of the SLX4 family. It depends on a divalent metal cation as a cofactor.

The protein resides in the nucleus. Its function is as follows. Catalytic subunit of a heterodimeric structure-specific endonuclease that resolves DNA secondary structures generated during DNA repair and recombination. Has endonuclease activity towards branched DNA substrates, introducing single-strand cuts in duplex DNA close to junctions with ss-DNA. This Cryptosporidium parvum (strain Iowa II) protein is Structure-specific endonuclease subunit SLX1 homolog.